Here is a 1039-residue protein sequence, read N- to C-terminus: Tetratricopeptide repeat protein 1 (1039 aa).

TPR repeat units lie at residues 51 to 84, 175 to 208, 210 to 243, 251 to 288, 326 to 359, 361 to 393, 437 to 469, 514 to 547, 634 to 667, 701 to 734, 737 to 770, and 799 to 832; these read REFWTKFAHEYYIRGLREQAILILKSGLETLKDS, ILGFLGKARILYAKGNYRSALKLYQRALVSNPQF, PDPRIGIGLCFWNLDMKTDALSAWTRVQQLDPKN, GLYYYDLAFQNVNNDSFVQNYGKALQHIQRAFKTRNND, ADGYYWMGRAYHQMGNNEKAMASYQKAKAADDRH, LSSVGIGQIQILQNDLTSAKLTFERIAEQNQSC, SDLYITQARLWEKEDTKKSLGFLTRALDFLESA, LLLDYNLARCEEELGNTSVASEAYVSILEKHPSF, EFRVHNDREKLKRQKLYIKAIQSYDQAIKFDPKN, ATTLINIGNCLAELKQFSRAIEVFETVYSSTGES, YGVLSCLGRVWLQRGRESKNVDYLKESVRYATLA, and PENSRTVEDLNFAMQQLDASIETFTKLVSVEHPP. Residues 838 to 929 adopt a coiled-coil conformation; it reads IEQRAKMAKN…SQQKASEDDM (92 aa). A disordered region spans residues 912 to 1039; the sequence is EEVLEWRKSQ…LNLFSEEDEE (128 aa). Positions 927 to 936 are enriched in acidic residues; it reads DDMSLSDDEE. Phosphoserine occurs at positions 930 and 932. Residues 940-953 show a composition bias toward basic residues; that stretch reads GKKKKKDRKKRKSK. A phosphoserine mark is found at S959, S961, S964, and S998. Residues 992-1006 are compositionally biased toward acidic residues; the sequence is YTFDQDSDAEGNQEE. The span at 1007–1018 shows a compositional bias: basic and acidic residues; the sequence is EVSRTIEEKQDN.

In terms of biological role, involved in promoting potassiumm ion uptake. The protein is Tetratricopeptide repeat protein 1 (tpr1) of Schizosaccharomyces pombe (strain 972 / ATCC 24843) (Fission yeast).